The following is a 593-amino-acid chain: Aspartate--tRNA ligase (593 aa).

Position 181 (E181) interacts with L-aspartate. Positions 205–208 (QLYK) are aspartate. Position 227 (R227) interacts with L-aspartate. ATP-binding positions include 227–229 (RDE) and Q236. H455 contacts L-aspartate. E489 serves as a coordination point for ATP. Residue R496 coordinates L-aspartate. ATP is bound at residue 541–544 (GLDR).

The protein belongs to the class-II aminoacyl-tRNA synthetase family. Type 1 subfamily. Homodimer.

It is found in the cytoplasm. It carries out the reaction tRNA(Asp) + L-aspartate + ATP = L-aspartyl-tRNA(Asp) + AMP + diphosphate. Catalyzes the attachment of L-aspartate to tRNA(Asp) in a two-step reaction: L-aspartate is first activated by ATP to form Asp-AMP and then transferred to the acceptor end of tRNA(Asp). This is Aspartate--tRNA ligase from Ruminiclostridium cellulolyticum (strain ATCC 35319 / DSM 5812 / JCM 6584 / H10) (Clostridium cellulolyticum).